We begin with the raw amino-acid sequence, 498 residues long: Guanosine-5'-triphosphate,3'-diphosphate pyrophosphatase (498 aa).

It belongs to the GppA/Ppx family. GppA subfamily.

The catalysed reaction is guanosine 3'-diphosphate 5'-triphosphate + H2O = guanosine 3',5'-bis(diphosphate) + phosphate + H(+). Its pathway is purine metabolism; ppGpp biosynthesis; ppGpp from GTP: step 2/2. Functionally, catalyzes the conversion of pppGpp to ppGpp. Guanosine pentaphosphate (pppGpp) is a cytoplasmic signaling molecule which together with ppGpp controls the 'stringent response', an adaptive process that allows bacteria to respond to amino acid starvation, resulting in the coordinated regulation of numerous cellular activities. In Serratia proteamaculans (strain 568), this protein is Guanosine-5'-triphosphate,3'-diphosphate pyrophosphatase.